Here is a 131-residue protein sequence, read N- to C-terminus: UPF0102 protein YraN (131 aa).

Polar residues predominate over residues 1–19; the sequence is MATVPTRSGSPRQLTTKQT. The segment at 1-21 is disordered; sequence MATVPTRSGSPRQLTTKQTGD.

Belongs to the UPF0102 family.

This Shigella flexneri serotype 5b (strain 8401) protein is UPF0102 protein YraN.